Reading from the N-terminus, the 347-residue chain is NHL repeat-containing protein 3 (347 aa).

A signal peptide spans 1-25; it reads MARFWVCVAGAGFFLAFLVLHSRFC. A glycan (N-linked (GlcNAc...) asparagine) is linked at Asn-32. The NHL 1 repeat unit spans residues 47–93; it reads RLDVGWPKHPEYFTGTTFCVAVDSLNGLVYIGQRGDNIPKILVFTED. Asn-101 is a glycosylation site (N-linked (GlcNAc...) asparagine). NHL repeat units follow at residues 150–196 and 200–243; these read TPGK…LSQD and LWLH…FDKD. 2 N-linked (GlcNAc...) asparagine glycosylation sites follow: Asn-206 and Asn-278. An NHL 4 repeat occupies 294 to 338; the sequence is GECSVISTIQLADQVLPHLLEVDRKTGAVYVAEIGAKQVQKYVPL.

The protein resides in the secreted. The polypeptide is NHL repeat-containing protein 3 (NHLRC3) (Homo sapiens (Human)).